The sequence spans 236 residues: Leucyl/phenylalanyl-tRNA--protein transferase (236 aa).

This sequence belongs to the L/F-transferase family.

Its subcellular location is the cytoplasm. It catalyses the reaction N-terminal L-lysyl-[protein] + L-leucyl-tRNA(Leu) = N-terminal L-leucyl-L-lysyl-[protein] + tRNA(Leu) + H(+). The catalysed reaction is N-terminal L-arginyl-[protein] + L-leucyl-tRNA(Leu) = N-terminal L-leucyl-L-arginyl-[protein] + tRNA(Leu) + H(+). It carries out the reaction L-phenylalanyl-tRNA(Phe) + an N-terminal L-alpha-aminoacyl-[protein] = an N-terminal L-phenylalanyl-L-alpha-aminoacyl-[protein] + tRNA(Phe). In terms of biological role, functions in the N-end rule pathway of protein degradation where it conjugates Leu, Phe and, less efficiently, Met from aminoacyl-tRNAs to the N-termini of proteins containing an N-terminal arginine or lysine. This is Leucyl/phenylalanyl-tRNA--protein transferase from Shewanella sp. (strain MR-4).